Here is a 766-residue protein sequence, read N- to C-terminus: 5-methyltetrahydropteroyltriglutamate--homocysteine methyltransferase (766 aa).

Residues 16-19 and lysine 117 each bind 5-methyltetrahydropteroyltri-L-glutamate; that span reads RELK. L-homocysteine contacts are provided by residues 442–444 and glutamate 495; that span reads IGS. L-methionine is bound by residues 442–444 and glutamate 495; that span reads IGS. Residues 526–527 and tryptophan 572 contribute to the 5-methyltetrahydropteroyltri-L-glutamate site; that span reads RC. Aspartate 610 lines the L-homocysteine pocket. Position 610 (aspartate 610) interacts with L-methionine. A 5-methyltetrahydropteroyltri-L-glutamate-binding site is contributed by glutamate 616. Positions 652, 654, and 676 each coordinate Zn(2+). Histidine 705 functions as the Proton donor in the catalytic mechanism. Cysteine 737 lines the Zn(2+) pocket.

This sequence belongs to the vitamin-B12 independent methionine synthase family. The cofactor is Zn(2+).

The enzyme catalyses 5-methyltetrahydropteroyltri-L-glutamate + L-homocysteine = tetrahydropteroyltri-L-glutamate + L-methionine. It participates in amino-acid biosynthesis; L-methionine biosynthesis via de novo pathway; L-methionine from L-homocysteine (MetE route): step 1/1. Its function is as follows. Catalyzes the transfer of a methyl group from 5-methyltetrahydrofolate to homocysteine resulting in methionine formation. This chain is 5-methyltetrahydropteroyltriglutamate--homocysteine methyltransferase, found in Bordetella avium (strain 197N).